Consider the following 320-residue polypeptide: Beta-carotene ketolase (320 aa).

The enzyme catalyses all-trans-beta-carotene + 2 AH2 + 2 O2 = echinenone + 2 A + 3 H2O. The catalysed reaction is echinenone + 2 AH2 + 2 O2 = canthaxanthin + 2 A + 3 H2O. It participates in carotenoid biosynthesis; astaxanthin biosynthesis. Functionally, converts beta-carotene to canthaxanthin via echinenone. The sequence is that of Beta-carotene ketolase from Haematococcus lacustris (Green alga).